Consider the following 298-residue polypeptide: UPF0282 protein Kcr_0286 (298 aa).

The protein belongs to the UPF0282 family.

The chain is UPF0282 protein Kcr_0286 from Korarchaeum cryptofilum (strain OPF8).